A 620-amino-acid polypeptide reads, in one-letter code: Chaperone protein HscA homolog (620 aa).

The protein belongs to the heat shock protein 70 family.

Functionally, chaperone involved in the maturation of iron-sulfur cluster-containing proteins. Has a low intrinsic ATPase activity which is markedly stimulated by HscB. This chain is Chaperone protein HscA homolog, found in Bordetella pertussis (strain Tohama I / ATCC BAA-589 / NCTC 13251).